Reading from the N-terminus, the 200-residue chain is Dephospho-CoA kinase (200 aa).

A DPCK domain is found at 3–200 (KVGLTGGIGS…EELQRRLHSR (198 aa)). ATP is bound at residue 11 to 16 (GSGKSS).

It belongs to the CoaE family.

It localises to the cytoplasm. It catalyses the reaction 3'-dephospho-CoA + ATP = ADP + CoA + H(+). Its pathway is cofactor biosynthesis; coenzyme A biosynthesis; CoA from (R)-pantothenate: step 5/5. Its function is as follows. Catalyzes the phosphorylation of the 3'-hydroxyl group of dephosphocoenzyme A to form coenzyme A. This chain is Dephospho-CoA kinase, found in Thermobifida fusca (strain YX).